The sequence spans 239 residues: tRNA (guanine-N(1)-)-methyltransferase (239 aa).

S-adenosyl-L-methionine-binding positions include Gly112 and 132-137 (IGDYVL).

This sequence belongs to the RNA methyltransferase TrmD family. Homodimer.

The protein localises to the cytoplasm. It catalyses the reaction guanosine(37) in tRNA + S-adenosyl-L-methionine = N(1)-methylguanosine(37) in tRNA + S-adenosyl-L-homocysteine + H(+). Its function is as follows. Specifically methylates guanosine-37 in various tRNAs. The sequence is that of tRNA (guanine-N(1)-)-methyltransferase from Rhodospirillum rubrum (strain ATCC 11170 / ATH 1.1.1 / DSM 467 / LMG 4362 / NCIMB 8255 / S1).